The sequence spans 1061 residues: Chimeric ERCC6-PGBD3 protein (1061 aa).

The tract at residues Met-1–Gly-39 is disordered. Polar residues predominate over residues His-8–Glu-27. A Phosphoserine modification is found at Ser-158. Lys-255 is covalently cross-linked (Glycyl lysine isopeptide (Lys-Gly) (interchain with G-Cter in SUMO2)). Disordered stretches follow at residues Lys-287 to Lys-323, Gly-344 to Ser-466, Val-494 to Leu-521, and Ser-537 to Arg-573. The segment covering Arg-353–Ala-363 has biased composition (basic and acidic residues). Residues Glu-364–Glu-392 are compositionally biased toward acidic residues. Phosphoserine is present on residues Ser-429 and Ser-430. A compositionally biased stretch (basic and acidic residues) spans Arg-451–Lys-462. Acidic residues predominate over residues Ser-506–Gly-515. Ser-554 carries the post-translational modification Phosphoserine.

Expressed in heart and oocytes, but not in granulosa cells (at protein level).

The protein localises to the nucleus. Its function is as follows. Involved in repair of DNA damage following UV irradiation, acting either in the absence of ERCC6 or synergistically with ERCC6. Involved in the regulation of gene expression. In the absence of ERCC6, induces the expression of genes characteristic of interferon-like antiviral responses. This response is almost completely suppressed in the presence of ERCC6. In the presence of ERCC6, regulates the expression of genes involved in metabolism regulation, including IGFBP5 and IGFBP7. In vitro binds to PGBD3-related transposable elements, called MER85s; these non-autonomous 140 bp elements are characterized by the presence of PGBD3 terminal inverted repeats and the absence of internal transposase ORF. This Homo sapiens (Human) protein is Chimeric ERCC6-PGBD3 protein.